Here is a 637-residue protein sequence, read N- to C-terminus: MSHQETHGFQTEVKQLLHLMIHSLYSNKEIFLRELVSNAADAADKLRYLALTNDSLYEGDGELRVRVSADKDKGTVTIEDNGIGMTRDGVIEHLGTIAKSGTAEFFKNLSGDSAKDSQLIGQFGVGFYSAFIVAKRVEVFTRAAGHSADEGVKWESEGEGNFSVETITKAERGTKIVLHLRDEEKEFADDWRLRSIITKYSDHISIPVEMYQEGTPERDGPDGEKIPATEGQWKAMNKATALWTRSKSDVSDEEYKEFYKHISHDFADPLDWSHNKVEGNQEYTSLLYIPAKAPWDLWNRDRKHGLKLFVQRVFIMDDAEQFMPSYLRFVQGLIDSNDLPLNVSREILQDNKVTRNLRQALTKRVLSMLEKLAKDDADKYQQFWAEFGTVLKEGPAEDFANRERIAGLLRFASTHTGDATPSVSLDDYIGRMKEGQEKIYYIVADSHEAAANSPHLELLKKKGIEVLLLSERIDEWLINHLHDYKEKALHSVTRGDLDLGALEDEAEKAAQEKLAQESEPLVERFKSALGDKVSDVKITTRLTDTPACVVTGEGEMSSQMIKLMQAAGQPVPESKPTLELNPTHPLVARLDKEQDETAFAEWAEMLLAQATLSERGSLADPSAFIKLVNQMLLKSVG.

The tract at residues 1–345 (MSHQETHGFQ…SNDLPLNVSR (345 aa)) is a; substrate-binding. The tract at residues 346–562 (EILQDNKVTR…EGEMSSQMIK (217 aa)) is b. The c stretch occupies residues 563–637 (LMQAAGQPVP…VNQMLLKSVG (75 aa)).

It belongs to the heat shock protein 90 family. Homodimer.

It localises to the cytoplasm. Its function is as follows. Molecular chaperone. Has ATPase activity. The sequence is that of Chaperone protein HtpG from Shewanella amazonensis (strain ATCC BAA-1098 / SB2B).